Here is a 298-residue protein sequence, read N- to C-terminus: Tyrosine recombinase XerD (298 aa).

In terms of domain architecture, Core-binding (CB) spans 3–88 (SSHNNLLQNF…AIRQFYKFLK (86 aa)). Residues 109-292 (SIPDYLTQDE…ANKTLREVHK (184 aa)) form the Tyr recombinase domain. Active-site residues include Arg-149, Lys-173, His-244, Arg-247, and His-270. Tyr-279 serves as the catalytic O-(3'-phospho-DNA)-tyrosine intermediate.

The protein belongs to the 'phage' integrase family. XerD subfamily. As to quaternary structure, forms a cyclic heterotetrameric complex composed of two molecules of XerC and two molecules of XerD.

Its subcellular location is the cytoplasm. In terms of biological role, site-specific tyrosine recombinase, which acts by catalyzing the cutting and rejoining of the recombining DNA molecules. The XerC-XerD complex is essential to convert dimers of the bacterial chromosome into monomers to permit their segregation at cell division. It also contributes to the segregational stability of plasmids. In Leptospira interrogans serogroup Icterohaemorrhagiae serovar copenhageni (strain Fiocruz L1-130), this protein is Tyrosine recombinase XerD.